Here is a 343-residue protein sequence, read N- to C-terminus: tRNA N6-adenosine threonylcarbamoyltransferase (343 aa).

Residues histidine 120 and histidine 124 each contribute to the Fe cation site. Substrate is bound by residues valine 142 to glycine 146, aspartate 175, glycine 188, aspartate 192, and asparagine 281. Position 310 (aspartate 310) interacts with Fe cation.

It belongs to the KAE1 / TsaD family. The cofactor is Fe(2+).

Its subcellular location is the cytoplasm. The catalysed reaction is L-threonylcarbamoyladenylate + adenosine(37) in tRNA = N(6)-L-threonylcarbamoyladenosine(37) in tRNA + AMP + H(+). Functionally, required for the formation of a threonylcarbamoyl group on adenosine at position 37 (t(6)A37) in tRNAs that read codons beginning with adenine. Is involved in the transfer of the threonylcarbamoyl moiety of threonylcarbamoyl-AMP (TC-AMP) to the N6 group of A37, together with TsaE and TsaB. TsaD likely plays a direct catalytic role in this reaction. The chain is tRNA N6-adenosine threonylcarbamoyltransferase from Bacillus cereus (strain ATCC 14579 / DSM 31 / CCUG 7414 / JCM 2152 / NBRC 15305 / NCIMB 9373 / NCTC 2599 / NRRL B-3711).